The chain runs to 926 residues: Bifunctional uridylyltransferase/uridylyl-removing enzyme (926 aa).

The interval 1–379 is uridylyltransferase; it reads MPVSFLSLAS…PKSRRSGASK (379 aa). A uridylyl-removing region spans residues 380-736; sequence QIDGFPVIQG…GHEMPAYDAT (357 aa). Positions 496 to 618 constitute an HD domain; that stretch reads VDEHAIRALD…VKSPERLRLL (123 aa). 2 ACT domains span residues 737-814 and 849-926; these read MISL…IRSS and VIEV…ISEK.

The protein belongs to the GlnD family. Requires Mg(2+) as cofactor.

The catalysed reaction is [protein-PII]-L-tyrosine + UTP = [protein-PII]-uridylyl-L-tyrosine + diphosphate. It catalyses the reaction [protein-PII]-uridylyl-L-tyrosine + H2O = [protein-PII]-L-tyrosine + UMP + H(+). With respect to regulation, uridylyltransferase (UTase) activity is inhibited by glutamine, while glutamine activates uridylyl-removing (UR) activity. Its function is as follows. Modifies, by uridylylation and deuridylylation, the PII regulatory proteins (GlnB and homologs), in response to the nitrogen status of the cell that GlnD senses through the glutamine level. Under low glutamine levels, catalyzes the conversion of the PII proteins and UTP to PII-UMP and PPi, while under higher glutamine levels, GlnD hydrolyzes PII-UMP to PII and UMP (deuridylylation). Thus, controls uridylylation state and activity of the PII proteins, and plays an important role in the regulation of nitrogen assimilation and metabolism. The sequence is that of Bifunctional uridylyltransferase/uridylyl-removing enzyme from Zymomonas mobilis subsp. mobilis (strain ATCC 31821 / ZM4 / CP4).